We begin with the raw amino-acid sequence, 405 residues long: Serine/threonine transporter SstT (405 aa).

The next 8 membrane-spanning stretches (helical) occupy residues 13-33, 43-63, 82-102, 141-161, 185-205, 217-237, 298-318, and 339-359; these read GGSL…LAGF, FLGD…VFVL, IILL…LMSF, ALIN…GIAL, FVIC…IAQT, LGVL…LIVF, MAGA…TLGI, and ASGV…LFGI.

The protein belongs to the dicarboxylate/amino acid:cation symporter (DAACS) (TC 2.A.23) family.

It is found in the cell inner membrane. The enzyme catalyses L-serine(in) + Na(+)(in) = L-serine(out) + Na(+)(out). It carries out the reaction L-threonine(in) + Na(+)(in) = L-threonine(out) + Na(+)(out). Its function is as follows. Involved in the import of serine and threonine into the cell, with the concomitant import of sodium (symport system). The protein is Serine/threonine transporter SstT of Shewanella amazonensis (strain ATCC BAA-1098 / SB2B).